The chain runs to 943 residues: PAX-interacting protein 1 (943 aa).

2 BRCT domains span residues 8–93 (VPEE…GFSP) and 94–182 (ESGQ…LYHP). Disordered regions lie at residues 190–281 (PEEE…RRLQ), 400–507 (AQQQ…QQMR), and 620–641 (QQHL…PHQT). Over residues 198-214 (ENERSSRSEGSYSDRRS) the composition is skewed to basic and acidic residues. Positions 220–230 (SSPTSSRDASP) are enriched in low complexity. Positions 620-635 (QQHLQNQQPLQHQNQQ) are enriched in low complexity. 2 consecutive BRCT domains span residues 664–756 (PEEG…RTLH) and 763–851 (PGAK…IQHS). The Nuclear localization signal motif lies at 730 to 747 (GKRCVTAHWLNTVLKKKK).

As to quaternary structure, interacts with smad2 via its last three BRCT domain-containing regions in an activin signal-dependent manner.

It is found in the nucleus. Functionally, involved in DNA damage response. May function as transcriptional cofactor in TGF beta signaling. Accentuates Smad2-dependent transcription. This Danio rerio (Zebrafish) protein is PAX-interacting protein 1 (paxip1).